The following is a 361-amino-acid chain: 5-formaminoimidazole-4-carboxamide-1-(beta)-D-ribofuranosyl 5'-monophosphate synthetase (361 aa).

5-amino-1-(5-phospho-beta-D-ribosyl)imidazole-4-carboxamide-binding residues include H27 and S94. Residues 116–348 (RAILRWEAER…MGQRIAKEIK (233 aa)) enclose the ATP-grasp domain. Residues 146–208 (PDDI…ANYC) and E230 each bind ATP. N258 contacts 5-amino-1-(5-phospho-beta-D-ribosyl)imidazole-4-carboxamide. Q297 and E310 together coordinate Mg(2+).

The protein belongs to the phosphohexose mutase family. It depends on Mg(2+) as a cofactor. The cofactor is Mn(2+).

The catalysed reaction is 5-amino-1-(5-phospho-beta-D-ribosyl)imidazole-4-carboxamide + formate + ATP = 5-formamido-1-(5-phospho-D-ribosyl)imidazole-4-carboxamide + ADP + phosphate. It participates in purine metabolism; IMP biosynthesis via de novo pathway; 5-formamido-1-(5-phospho-D-ribosyl)imidazole-4-carboxamide from 5-amino-1-(5-phospho-D-ribosyl)imidazole-4-carboxamide (formate route): step 1/1. Its function is as follows. Catalyzes the ATP- and formate-dependent formylation of 5-aminoimidazole-4-carboxamide-1-beta-d-ribofuranosyl 5'-monophosphate (AICAR) to 5-formaminoimidazole-4-carboxamide-1-beta-d-ribofuranosyl 5'-monophosphate (FAICAR) in the absence of folates. This is 5-formaminoimidazole-4-carboxamide-1-(beta)-D-ribofuranosyl 5'-monophosphate synthetase from Methanococcus maripaludis (strain C5 / ATCC BAA-1333).